The chain runs to 535 residues: Dual specificity calcium/calmodulin-dependent 3',5'-cyclic nucleotide phosphodiesterase 1A (535 aa).

Calmodulin-binding stretches follow at residues 24–44 (TEKM…QLER) and 114–137 (EKPK…MYRK). The PDEase domain maps to 142–522 (VGLAYPAAVI…ERWKELAAQE (381 aa)). The active-site Proton donor is the His219. Residues His223, His259, Asp260, and Asp366 each coordinate Zn(2+). Mg(2+) is bound at residue Asp260.

It belongs to the cyclic nucleotide phosphodiesterase family. PDE1 subfamily. As to quaternary structure, homodimer. Interacts with YWHAZ. Zn(2+) serves as cofactor. Requires Mg(2+) as cofactor. Several tissues, including brain, kidney, testes and heart.

It carries out the reaction a nucleoside 3',5'-cyclic phosphate + H2O = a nucleoside 5'-phosphate + H(+). It catalyses the reaction 3',5'-cyclic GMP + H2O = GMP + H(+). The catalysed reaction is 3',5'-cyclic AMP + H2O = AMP + H(+). With respect to regulation, type I PDE are activated by the binding of calmodulin in the presence of Ca(2+). Functionally, calcium/calmodulin-dependent cyclic nucleotide phosphodiesterase with a dual specificity for the second messengers cGMP and cAMP, which are key regulators of many important physiological processes. Has a higher efficiency with cGMP compared to cAMP. This chain is Dual specificity calcium/calmodulin-dependent 3',5'-cyclic nucleotide phosphodiesterase 1A, found in Homo sapiens (Human).